Consider the following 359-residue polypeptide: DNA-directed RNA polymerase RPB3-11 homolog (359 aa).

It in the N-terminal section; belongs to the archaeal RpoD/eukaryotic RPB3 RNA polymerase subunit family. The protein in the C-terminal section; belongs to the archaeal RpoL/eukaryotic RPB11/RPC19 RNA polymerase subunit family. Part of the viral DNA-directed RNA polymerase that consists of 8 polII-like subunits (RPB1, RPB2, RPB3, RPB5, RPB6, RPB7, RPB9, RPB10), a capping enzyme and a termination factor.

It is found in the host cytoplasm. Its subcellular location is the virion. Its function is as follows. Component of the DNA-directed RNA polymerase (RNAP) that catalyzes the transcription in the cytoplasm of viral DNA into RNA using the four ribonucleoside triphosphates as substrates. The sequence is that of DNA-directed RNA polymerase RPB3-11 homolog from Ornithodoros (relapsing fever ticks).